Consider the following 102-residue polypeptide: Small ribosomal subunit protein uS14m (102 aa).

This sequence belongs to the universal ribosomal protein uS14 family.

The protein resides in the mitochondrion. The protein is Small ribosomal subunit protein uS14m (RPS14) of Paramecium tetraurelia.